The following is a 440-amino-acid chain: R3H and coiled-coil domain-containing protein 1 (440 aa).

An R3H domain is found at 16 to 81 (NDFVHRIQEE…KRRTVICHQD (66 aa)). The segment at 154 to 225 (TSVLKREAPA…LGPESQSGKG (72 aa)) is disordered. Residues 157–168 (LKREAPAGRDPE) are compositionally biased toward basic and acidic residues. Residue Ser236 is modified to Phosphoserine. Residues 242–300 (LEKGKESLLEKRLVAEEEEDEEEVEEDGPSSCSEDDYSELLQEITDNLTKKEIQIEKIH) adopt a coiled-coil conformation. A disordered region spans residues 254–276 (LVAEEEEDEEEVEEDGPSSCSED). Over residues 257–276 (EEEEDEEEVEEDGPSSCSED) the composition is skewed to acidic residues.

This chain is R3H and coiled-coil domain-containing protein 1, found in Homo sapiens (Human).